Consider the following 122-residue polypeptide: Large ribosomal subunit protein uL14 (122 aa).

Belongs to the universal ribosomal protein uL14 family. In terms of assembly, part of the 50S ribosomal subunit. Forms a cluster with proteins L3 and L19. In the 70S ribosome, L14 and L19 interact and together make contacts with the 16S rRNA in bridges B5 and B8.

In terms of biological role, binds to 23S rRNA. Forms part of two intersubunit bridges in the 70S ribosome. The chain is Large ribosomal subunit protein uL14 from Beutenbergia cavernae (strain ATCC BAA-8 / DSM 12333 / CCUG 43141 / JCM 11478 / NBRC 16432 / NCIMB 13614 / HKI 0122).